Reading from the N-terminus, the 296-residue chain is 4-hydroxybenzoate octaprenyltransferase (296 aa).

8 helical membrane passes run 28 to 48 (PIGI…AGKG), 52 to 72 (LKTV…GCVI), 102 to 122 (ALAL…FTNA), 146 to 166 (YYPQ…AFTA), 169 to 189 (GDLP…TVGY), 219 to 239 (VIIL…GARF), 241 to 261 (LGAC…WEFW), and 275 to 295 (FLHN…DYAV).

Belongs to the UbiA prenyltransferase family. Mg(2+) serves as cofactor.

It is found in the cell inner membrane. The catalysed reaction is all-trans-octaprenyl diphosphate + 4-hydroxybenzoate = 4-hydroxy-3-(all-trans-octaprenyl)benzoate + diphosphate. The protein operates within cofactor biosynthesis; ubiquinone biosynthesis. In terms of biological role, catalyzes the prenylation of para-hydroxybenzoate (PHB) with an all-trans polyprenyl group. Mediates the second step in the final reaction sequence of ubiquinone-8 (UQ-8) biosynthesis, which is the condensation of the polyisoprenoid side chain with PHB, generating the first membrane-bound Q intermediate 3-octaprenyl-4-hydroxybenzoate. This is 4-hydroxybenzoate octaprenyltransferase from Pseudomonas savastanoi pv. phaseolicola (strain 1448A / Race 6) (Pseudomonas syringae pv. phaseolicola (strain 1448A / Race 6)).